Reading from the N-terminus, the 206-residue chain is MARYLGPKCKLSRREGCDLLLKSGVRDHKSKCKSEKLPGQHGDKKPRLNSYGIQLREKQKIRRLYGILEKQFRNYYKKAARQKGSTGENLMALLERRLDNVVYRMGFASTRAEARQLVAHKAILVNDKVVNVPSFLVNPGDTVSVRQKAKNQGRIQAALALSEQRAPCDWITVDTGSFKGTFSTAPTLMDLSSDYNVNLVVELYSK.

An S4 RNA-binding domain is found at 96 to 161 (RRLDNVVYRM…QGRIQAALAL (66 aa)).

It belongs to the universal ribosomal protein uS4 family. As to quaternary structure, part of the 30S ribosomal subunit. Contacts protein S5. The interaction surface between S4 and S5 is involved in control of translational fidelity.

One of the primary rRNA binding proteins, it binds directly to 16S rRNA where it nucleates assembly of the body of the 30S subunit. Its function is as follows. With S5 and S12 plays an important role in translational accuracy. In Legionella pneumophila (strain Corby), this protein is Small ribosomal subunit protein uS4.